The following is a 55-amino-acid chain: ATP synthase F(0) complex subunit 8 (55 aa).

A helical transmembrane segment spans residues 7-24; sequence NPWFFIMLLSWLTFSLII. Positions 35–55 are disordered; it reads NPPSNKTTTHTKTTPWTWPWT. Over residues 37–55 the composition is skewed to low complexity; that stretch reads PSNKTTTHTKTTPWTWPWT.

Belongs to the ATPase protein 8 family. As to quaternary structure, component of the ATP synthase complex composed at least of ATP5F1A/subunit alpha, ATP5F1B/subunit beta, ATP5MC1/subunit c (homooctomer), MT-ATP6/subunit a, MT-ATP8/subunit 8, ATP5ME/subunit e, ATP5MF/subunit f, ATP5MG/subunit g, ATP5MK/subunit k, ATP5MJ/subunit j, ATP5F1C/subunit gamma, ATP5F1D/subunit delta, ATP5F1E/subunit epsilon, ATP5PF/subunit F6, ATP5PB/subunit b, ATP5PD/subunit d, ATP5PO/subunit OSCP. ATP synthase complex consists of a soluble F(1) head domain (subunits alpha(3) and beta(3)) - the catalytic core - and a membrane F(0) domain - the membrane proton channel (subunits c, a, 8, e, f, g, k and j). These two domains are linked by a central stalk (subunits gamma, delta, and epsilon) rotating inside the F1 region and a stationary peripheral stalk (subunits F6, b, d, and OSCP).

Its subcellular location is the mitochondrion membrane. Subunit 8, of the mitochondrial membrane ATP synthase complex (F(1)F(0) ATP synthase or Complex V) that produces ATP from ADP in the presence of a proton gradient across the membrane which is generated by electron transport complexes of the respiratory chain. ATP synthase complex consist of a soluble F(1) head domain - the catalytic core - and a membrane F(1) domain - the membrane proton channel. These two domains are linked by a central stalk rotating inside the F(1) region and a stationary peripheral stalk. During catalysis, ATP synthesis in the catalytic domain of F(1) is coupled via a rotary mechanism of the central stalk subunits to proton translocation. In vivo, can only synthesize ATP although its ATP hydrolase activity can be activated artificially in vitro. Part of the complex F(0) domain. This is ATP synthase F(0) complex subunit 8 from Chaetura pelagica (Chimney swift).